The primary structure comprises 504 residues: D-alanine--D-alanyl carrier protein ligase (504 aa).

Position 152 to 153 (152 to 153) interacts with ATP; it reads TS. Asp197 serves as a coordination point for D-alanine. 292-297 serves as a coordination point for ATP; that stretch reads NTYGPT. Val301 serves as a coordination point for D-alanine. ATP is bound by residues Asp383, 394–397, and Lys492; that span reads YNGR. A D-alanine-binding site is contributed by Lys492.

This sequence belongs to the ATP-dependent AMP-binding enzyme family. DltA subfamily.

It is found in the cytoplasm. The catalysed reaction is holo-[D-alanyl-carrier protein] + D-alanine + ATP = D-alanyl-[D-alanyl-carrier protein] + AMP + diphosphate. It functions in the pathway cell wall biogenesis; lipoteichoic acid biosynthesis. In terms of biological role, catalyzes the first step in the D-alanylation of lipoteichoic acid (LTA), the activation of D-alanine and its transfer onto the D-alanyl carrier protein (Dcp) DltC. In an ATP-dependent two-step reaction, forms a high energy D-alanyl-AMP intermediate, followed by transfer of the D-alanyl residue as a thiol ester to the phosphopantheinyl prosthetic group of the Dcp. D-alanylation of LTA plays an important role in modulating the properties of the cell wall in Gram-positive bacteria, influencing the net charge of the cell wall. The chain is D-alanine--D-alanyl carrier protein ligase from Bacillus cereus (strain ZK / E33L).